We begin with the raw amino-acid sequence, 535 residues long: Probable glucomannan 4-beta-mannosyltransferase 14 (535 aa).

A helical transmembrane segment spans residues 42 to 62 (QVVSVLLFVDAAYMAIVVAIV). Asp131 is an active-site residue. Substrate-binding residues include Asp193 and Asp195. Asp287 is a catalytic residue. The next 4 helical transmembrane spans lie at 366 to 386 (IVVH…TVIF), 403 to 423 (ITIL…YWIL), 482 to 502 (IMVG…GRTY), and 503 to 523 (LYVY…GYVG).

Belongs to the glycosyltransferase 2 family. Plant cellulose synthase-like A subfamily.

Its subcellular location is the golgi apparatus membrane. It catalyses the reaction GDP-mannose + (glucomannan)n = GDP + (glucomannan)n+1.. Its function is as follows. Probable mannan synthase which consists of a 4-beta-mannosyltransferase activity on mannan using GDP-mannose. The beta-1,4-mannan product is the backbone for galactomannan synthesis by galactomannan galactosyltransferase. Galactomannan is a noncellulosic polysaccharides of plant cell wall. This Arabidopsis thaliana (Mouse-ear cress) protein is Probable glucomannan 4-beta-mannosyltransferase 14.